A 338-amino-acid polypeptide reads, in one-letter code: Ketol-acid reductoisomerase (NADP(+)) (338 aa).

Residues 1–181 (MKVFYDKDAD…GGGRAGIIET (181 aa)) enclose the KARI N-terminal Rossmann domain. NADP(+) contacts are provided by residues 24 to 27 (YGSQ), Arg-47, and Ser-52. His-107 is a catalytic residue. Gly-133 contacts NADP(+). Residues 182 to 327 (NFREETETDL…AKLRAMMPWI (146 aa)) form the KARI C-terminal knotted domain. The Mg(2+) site is built by Asp-190, Glu-194, Glu-226, and Glu-230. Ser-251 serves as a coordination point for substrate.

It belongs to the ketol-acid reductoisomerase family. The cofactor is Mg(2+).

It catalyses the reaction (2R)-2,3-dihydroxy-3-methylbutanoate + NADP(+) = (2S)-2-acetolactate + NADPH + H(+). It carries out the reaction (2R,3R)-2,3-dihydroxy-3-methylpentanoate + NADP(+) = (S)-2-ethyl-2-hydroxy-3-oxobutanoate + NADPH + H(+). It functions in the pathway amino-acid biosynthesis; L-isoleucine biosynthesis; L-isoleucine from 2-oxobutanoate: step 2/4. The protein operates within amino-acid biosynthesis; L-valine biosynthesis; L-valine from pyruvate: step 2/4. In terms of biological role, involved in the biosynthesis of branched-chain amino acids (BCAA). Catalyzes an alkyl-migration followed by a ketol-acid reduction of (S)-2-acetolactate (S2AL) to yield (R)-2,3-dihydroxy-isovalerate. In the isomerase reaction, S2AL is rearranged via a Mg-dependent methyl migration to produce 3-hydroxy-3-methyl-2-ketobutyrate (HMKB). In the reductase reaction, this 2-ketoacid undergoes a metal-dependent reduction by NADPH to yield (R)-2,3-dihydroxy-isovalerate. In Polynucleobacter necessarius subsp. necessarius (strain STIR1), this protein is Ketol-acid reductoisomerase (NADP(+)).